A 393-amino-acid polypeptide reads, in one-letter code: Elongation factor Tu (393 aa).

A tr-type G domain is found at 6-204; that stretch reads KPHINVGTIG…ALEKIELPVR (199 aa). Residues 15–22 form a G1 region; that stretch reads GHVDHGKT. 15–22 lines the GTP pocket; the sequence is GHVDHGKT. Thr22 contributes to the Mg(2+) binding site. Positions 58–62 are G2; sequence GITIS. Residues 79 to 82 form a G3 region; the sequence is DCPG. GTP contacts are provided by residues 79-83 and 134-137; these read DCPGH and NKCD. A G4 region spans residues 134-137; sequence NKCD. Positions 172-174 are G5; the sequence is SAV.

Belongs to the TRAFAC class translation factor GTPase superfamily. Classic translation factor GTPase family. EF-Tu/EF-1A subfamily. As to quaternary structure, monomer.

It is found in the cytoplasm. The enzyme catalyses GTP + H2O = GDP + phosphate + H(+). GTP hydrolase that promotes the GTP-dependent binding of aminoacyl-tRNA to the A-site of ribosomes during protein biosynthesis. The protein is Elongation factor Tu of Anaplasma marginale (strain St. Maries).